Reading from the N-terminus, the 190-residue chain is FMN reductase (NADH) RutF (190 aa).

This sequence belongs to the non-flavoprotein flavin reductase family. RutF subfamily.

The enzyme catalyses FMNH2 + NAD(+) = FMN + NADH + 2 H(+). Its function is as follows. Catalyzes the reduction of FMN to FMNH2 which is used to reduce pyrimidine by RutA via the Rut pathway. The chain is FMN reductase (NADH) RutF from Pantoea ananatis (strain LMG 20103).